Consider the following 727-residue polypeptide: ABC transporter G family member STR2 (727 aa).

Residues 1–475 lie on the Cytoplasmic side of the membrane; sequence MKTQGLELET…NFTNIRRTPE (475 aa). The ABC transporter domain maps to 25-275; sequence LEFESLTYTV…LNRMGRKIPK (251 aa). ATP is bound at residue 69-76; the sequence is GPSGAGKS. Residues 476-496 form a helical membrane-spanning segment; it reads LFLSRLMVLTFMGVMMATMFH. Topologically, residues 497 to 510 are extracellular; that stretch reads NPKNTLQGITNRLS. A helical transmembrane segment spans residues 511 to 531; that stretch reads FFIFTVCLFFFSSNDAVPAFI. Over 532–559 the chain is Cytoplasmic; sequence QERFIFIRETSHNAYRASCYTIASLITH. A helical membrane pass occupies residues 560-580; the sequence is MPFLALQALAYAAIVWFALEL. Over 581 to 583 the chain is Extracellular; that stretch reads RGP. A helical membrane pass occupies residues 584–604; that stretch reads FIYFFLVLFISLLSTNSFVVF. The Cytoplasmic portion of the chain corresponds to 605–612; sequence VSSIVPNY. The helical transmembrane segment at 613–633 threads the bilayer; that stretch reads ILGYAAVIAFTALFFLFCGYF. Residues 634–699 lie on the Extracellular side of the membrane; the sequence is LSSEDIPLYW…GTEEIKKRNN (66 aa). N-linked (GlcNAc...) asparagine glycosylation occurs at Asn667. Residues 700–720 form a helical membrane-spanning segment; that stretch reads VLIMLGWAVLYRILFYIILRF. The Cytoplasmic portion of the chain corresponds to 721–727; the sequence is ASKNQRS.

It belongs to the ABC transporter superfamily. ABCG family. Stunted arbuscule (STR) subfamily. As to quaternary structure, heterodimerizes with STR; the resulting transporter is located in the peri-arbuscular membrane. As to expression, expressed constitutively in the vascular tissue of roots.

The protein localises to the cell membrane. Its function is as follows. Together with STR, required for arbuscule development in arbuscular mycorrhizal symbiosis. This chain is ABC transporter G family member STR2, found in Medicago truncatula (Barrel medic).